The chain runs to 1036 residues: MFAQLDTKTVYSFMDSLIDLNHYFERAKQFGYHTIGIMDKDNLYGAYHFIKGCQKNGLQPVLGLEIEILYQERQVLLNLIAQNTQGYHQLLKISTAKMSGKLHMDYFCQHLEGIAVIIPSKGWSDTLVVPFDYYIGVDQYTDLSHMDSKRQLIPLRTVRYFAQDDMETLHMLHAIRDNLSLAETPVVESDQELADCQQLTAFYQTHCPQALQNLEDLVSGIYYDFDTNLKLPHFNRDKSAKQELQDLTEAGLKEKGLWKEPYQSRLLHELVIISDMGFDDYFLIVWDLLRFGRSKGYYMGMGRGSAAGSLVAYALNITGIDPVQHDLLFERFLNKERYSMPDIDIDLPDIYRSEFLRYVRNRYGSDHSAQIVTFSTFGPKQAIRDVFKRFGVPEYELTNLTKKIGFKDSLATVYEKSISFRQVINSRTEFQKAFAIAKRIEGNPRQTSIHAAGIVMSDDALTNHIPLKSGDDMMITQYDAHAVEANGLLKMDFLGLRNLTFVQKMQEKVAKDYGCQIDITAIDLEDPQTLALFAKGDTKGIFQFEQNGAINLLKRIKPQRFEEIVATTSLNRPGASDYTTNFIKRREGQEKIDLIDPVIAPILEPTYGIMLYQEQVMQIAQVYAGFTLGKADLLRRAMSKKNLQEMQKMEEDFIASAKHLGRAEETARGLFKRMEKFAGYGFNRSHAFAYSALAFQLAYFKAHYPAVFYDIMMNYSSSDYITDALESDFQVAQVTINSIPYTDKIEASKIYMGLKNIKGLPRDFAYWIIEQRPFNSVEDFLTRTPEKYQKKVFLEPLIKIGLFDCFEPNRKKILDNLDGLLVFVNELGSLFSDSSFSWVDTKDYSVTEKYSLEQEIVGVGMSKHPLIDIAEKSTQTFTPISQLVKESEAVVLIQIDSIRIIRTKTSGQQMAFLSVNDTKKKLDVTLFPQEYAIYKDQLKEGEFYYLKGRIKERDHRLQMVCQQVQMAISQKYWLLVENHQFDSQISEILGAFPGTTPVVIHYQKNKETIALTKIQVHVTENLKEKLRPFVLKTVFR.

This sequence belongs to the DNA polymerase type-C family. DnaE subfamily. As to quaternary structure, DNA polymerase III contains a core (composed of alpha, epsilon and theta chains) that associates with a tau subunit. This core dimerizes to form the PolIII' complex. PolIII' associates with the gamma complex (composed of gamma, delta, delta', psi and chi chains) and with the beta chain to form the complete DNA polymerase III complex.

The protein resides in the cytoplasm. It carries out the reaction DNA(n) + a 2'-deoxyribonucleoside 5'-triphosphate = DNA(n+1) + diphosphate. Functionally, DNA polymerase III is a complex, multichain enzyme responsible for most of the replicative synthesis in bacteria. This DNA polymerase also exhibits 3' to 5' exonuclease activity. The alpha chain is the DNA polymerase. The polypeptide is DNA polymerase III subunit alpha (dnaE) (Streptococcus pyogenes serotype M1).